Here is a 205-residue protein sequence, read N- to C-terminus: Anaerobic dimethyl sulfoxide reductase chain B (205 aa).

3 4Fe-4S ferredoxin-type domains span residues 5–33 (YGFFIDSSRCTGCKTCELACKDYKDLTPE), 59–89 (FAYYLSISCNHCEDPACTKVCPSGAMHKRED), and 90–119 (GFVVVDEDVCIGCRYCHMACPYGAPQYNET). 16 residues coordinate [4Fe-4S] cluster: C14, C17, C20, C24, C67, C70, C75, C79, C99, C102, C105, C109, C126, C129, C141, and C145. Residues 184–205 (KPNANSRPTGDTTGYLANPKEV) form a disordered region. Over residues 186–195 (NANSRPTGDT) the composition is skewed to polar residues.

As to quaternary structure, heterotrimeric enzyme composed of a catalytic heterodimer (DmsAB) and a membrane anchor protein (DmsC). Requires [4Fe-4S] cluster as cofactor.

Functionally, electron transfer subunit of the terminal reductase during anaerobic growth on various sulfoxide and N-oxide compounds. This is Anaerobic dimethyl sulfoxide reductase chain B (dmsB) from Escherichia coli (strain K12).